We begin with the raw amino-acid sequence, 337 residues long: MQVYYDKDADLSLIKGKTVAIIGYGSQGHAHAANLKDSGVNVVIGLRHGSSWKKAEAAGHVVKTVAEATKEADVVMLLLPDETMPAVYHAEVAANLKEGATLAFAHGFNVHYNQIVPRADLDVIMVAPKGPGHTVRSEYKRGGGVPSLIAVYQDNSGKAKDIALSYAAANGGTKGGVIETTFREETETDLFGEQAVLCGGVAELIKAGFETLTEAGYAPEMAYFECLHEMKLIVDLIFEGGIANMNYSISNNAEYGEYVTGPEVVNASSKEAMRNALKRIQTGEYAKMFIQEGNVNYASMTARRRLNADHQVEKVGARLRAMMPWITANKLVDQDKN.

A KARI N-terminal Rossmann domain is found at Met1 to Thr180. NADP(+)-binding positions include Tyr24–Gln27, Arg47, and Ser51. His106 is a catalytic residue. Gly132 is an NADP(+) binding site. Positions Thr181 to Ile326 constitute a KARI C-terminal knotted domain. Positions 189, 193, 225, and 229 each coordinate Mg(2+). Ser250 serves as a coordination point for substrate.

This sequence belongs to the ketol-acid reductoisomerase family. It depends on Mg(2+) as a cofactor.

It carries out the reaction (2R)-2,3-dihydroxy-3-methylbutanoate + NADP(+) = (2S)-2-acetolactate + NADPH + H(+). It catalyses the reaction (2R,3R)-2,3-dihydroxy-3-methylpentanoate + NADP(+) = (S)-2-ethyl-2-hydroxy-3-oxobutanoate + NADPH + H(+). It functions in the pathway amino-acid biosynthesis; L-isoleucine biosynthesis; L-isoleucine from 2-oxobutanoate: step 2/4. Its pathway is amino-acid biosynthesis; L-valine biosynthesis; L-valine from pyruvate: step 2/4. Functionally, involved in the biosynthesis of branched-chain amino acids (BCAA). Catalyzes an alkyl-migration followed by a ketol-acid reduction of (S)-2-acetolactate (S2AL) to yield (R)-2,3-dihydroxy-isovalerate. In the isomerase reaction, S2AL is rearranged via a Mg-dependent methyl migration to produce 3-hydroxy-3-methyl-2-ketobutyrate (HMKB). In the reductase reaction, this 2-ketoacid undergoes a metal-dependent reduction by NADPH to yield (R)-2,3-dihydroxy-isovalerate. The polypeptide is Ketol-acid reductoisomerase (NADP(+)) (Neisseria gonorrhoeae (strain ATCC 700825 / FA 1090)).